We begin with the raw amino-acid sequence, 380 residues long: Methenyltetrahydrofolate synthase domain-containing protein (380 aa).

Residues 245-258 (EEQAGKDVTLRDGP) show a composition bias toward basic and acidic residues. Disordered regions lie at residues 245–283 (EEQA…PLSS) and 361–380 (LVGS…IAGP). One can recognise an RRM domain in the interval 282-355 (SSVQIGNLPR…NTVRVVLARQ (74 aa)).

The sequence is that of Methenyltetrahydrofolate synthase domain-containing protein (MTHFSD) from Bos taurus (Bovine).